The following is a 489-amino-acid chain: Hyaluronoglucuronidase (489 aa).

The Proton donor role is filled by Glu176. Glu290 acts as the Nucleophile in catalysis.

It belongs to the glycosyl hydrolase 79 family.

The catalysed reaction is Random hydrolysis of (1-&gt;3)-linkages between beta-D-glucuronate and N-acetyl-D-glucosamine residues in hyaluronate.. Its activity is regulated as follows. Hyaluronidase activity is inhibited by Mn(2+), Cu(2+) and Fe(3+). Its function is as follows. Hyaluronidase that mediates hydrolysis of (1-&gt;3)-linkages between beta-D-glucuronate and N-acetyl-D-glucosamine residues in hyaluronate. Very specific to hyaluronate: not able to hydrolyze chitin, heparin or chondroitin sulfate. This Hirudo nipponia (Korean blood-sucking leech) protein is Hyaluronoglucuronidase.